An 876-amino-acid polypeptide reads, in one-letter code: Protein argonaute 17 (876 aa).

The PAZ domain occupies 246–338 (PVVDYVAQLL…LPLEVCKIAE (93 aa)). Residues 514-834 (LLIVILPNNN…LSSRARCYIK (321 aa)) form the Piwi domain. The interval 839–859 (GDSTSHTSLPSEEDSSAASET) is disordered.

It belongs to the argonaute family. Ago subfamily.

Functionally, probably involved in the RNA silencing pathway. May bind to short RNAs such as microRNAs (miRNAs) or short interfering RNAs (siRNAs), and represses the translation of mRNAs which are complementary to them. This chain is Protein argonaute 17 (AGO17), found in Oryza sativa subsp. japonica (Rice).